Here is a 340-residue protein sequence, read N- to C-terminus: Ketol-acid reductoisomerase (NADP(+)) (340 aa).

A KARI N-terminal Rossmann domain is found at 1 to 182 (MRVYYDRDCD…GGGRSGIIET (182 aa)). NADP(+) contacts are provided by residues 24–27 (YGSQ), arginine 48, serine 51, serine 53, and 83–86 (DELQ). Histidine 108 is an active-site residue. An NADP(+)-binding site is contributed by glycine 134. Positions 183–329 (NFRQECETDL…EKLRGMMPWI (147 aa)) constitute a KARI C-terminal knotted domain. Mg(2+) contacts are provided by aspartate 191, glutamate 195, glutamate 227, and glutamate 231. Serine 252 lines the substrate pocket.

It belongs to the ketol-acid reductoisomerase family. Mg(2+) is required as a cofactor.

The enzyme catalyses (2R)-2,3-dihydroxy-3-methylbutanoate + NADP(+) = (2S)-2-acetolactate + NADPH + H(+). It carries out the reaction (2R,3R)-2,3-dihydroxy-3-methylpentanoate + NADP(+) = (S)-2-ethyl-2-hydroxy-3-oxobutanoate + NADPH + H(+). The protein operates within amino-acid biosynthesis; L-isoleucine biosynthesis; L-isoleucine from 2-oxobutanoate: step 2/4. It participates in amino-acid biosynthesis; L-valine biosynthesis; L-valine from pyruvate: step 2/4. Its function is as follows. Involved in the biosynthesis of branched-chain amino acids (BCAA). Catalyzes an alkyl-migration followed by a ketol-acid reduction of (S)-2-acetolactate (S2AL) to yield (R)-2,3-dihydroxy-isovalerate. In the isomerase reaction, S2AL is rearranged via a Mg-dependent methyl migration to produce 3-hydroxy-3-methyl-2-ketobutyrate (HMKB). In the reductase reaction, this 2-ketoacid undergoes a metal-dependent reduction by NADPH to yield (R)-2,3-dihydroxy-isovalerate. In Cereibacter sphaeroides (strain ATCC 17025 / ATH 2.4.3) (Rhodobacter sphaeroides), this protein is Ketol-acid reductoisomerase (NADP(+)).